We begin with the raw amino-acid sequence, 200 residues long: MSEALTELASYLGEARGNLIAASQLKYGELTLTATGENLIALLTFLRDDAKCGFVNMIDICGVDWPQRELRFDVVYHLLSPKKNLRIRVKVATDEDTPVPSACAVYPGADWFERETWDMYGVLFTGHPDLRRILTDYGFEGHPLRKDFPTTGFVEVRYDDAAKRVVYEPVELKQEFRNFDFMSPWEGTEYVLPGDEKAKQ.

This sequence belongs to the complex I 30 kDa subunit family. NDH-1 is composed of 14 different subunits. Subunits NuoB, C, D, E, F, and G constitute the peripheral sector of the complex.

Its subcellular location is the cell inner membrane. The catalysed reaction is a quinone + NADH + 5 H(+)(in) = a quinol + NAD(+) + 4 H(+)(out). Its function is as follows. NDH-1 shuttles electrons from NADH, via FMN and iron-sulfur (Fe-S) centers, to quinones in the respiratory chain. The immediate electron acceptor for the enzyme in this species is believed to be ubiquinone. Couples the redox reaction to proton translocation (for every two electrons transferred, four hydrogen ions are translocated across the cytoplasmic membrane), and thus conserves the redox energy in a proton gradient. The protein is NADH-quinone oxidoreductase subunit C of Rhizobium etli (strain ATCC 51251 / DSM 11541 / JCM 21823 / NBRC 15573 / CFN 42).